We begin with the raw amino-acid sequence, 166 residues long: Transmembrane protein 278 (166 aa).

Residues 1–15 show a composition bias toward acidic residues; sequence MSDQERETEEDEGGD. Residues 1–28 are disordered; it reads MSDQERETEEDEGGDPSDTAPMLPQRLP. The next 3 helical transmembrane spans lie at 39–59, 65–85, and 111–131; these read GWAS…WALA, LLLP…VVYL, and AAVI…ASAA.

Belongs to the TMEM88 family.

The protein resides in the membrane. The chain is Transmembrane protein 278 (TMEM278) from Bos taurus (Bovine).